A 562-amino-acid chain; its full sequence is 2-hydroxyisobutanoyl-CoA mutase large subunit (562 aa).

Residues 76-79, 86-88, Asp117, 196-198, Arg235, Asn240, His245, and Arg284 contribute to the (3S)-3-hydroxybutanoyl-CoA site; these read YPTM, TMR, and TVQ.

It belongs to the acyl-CoA mutase large subunit family. Homotetramer composed of two large substrate-binding subunits (HcmA) and two small cobalamin-binding subunits (HcmB).

It carries out the reaction 2-hydroxyisobutanoyl-CoA = (3S)-3-hydroxybutanoyl-CoA. Functionally, together with HcmB, catalyzes the isomerization of 2-hydroxyisobutyryl-CoA and 3-hydroxybutyryl-CoA. Is specific for 2-hydroxyisobutyryl-CoA and (S)-3-hydroxybutyryl-CoA, and shows only very low activity with (R)-3-hydroxybutyryl-CoA, isobutyryl-CoA and butyryl-CoA. In vitro, can isomerize pivalyl-CoA and isovaleryl-CoA, with much lower efficiency. Plays a central role in the degradation of substrates bearing a tert-butyl moiety, such as the fuel oxygenate methyl tert-butyl ether (MTBE) and its metabolites. The chain is 2-hydroxyisobutanoyl-CoA mutase large subunit from Aquincola tertiaricarbonis.